The following is a 484-amino-acid chain: Signal transduction histidine-protein kinase/phosphatase MprB (484 aa).

A compositionally biased stretch (low complexity) spans 1–10 (MAADNAGRWP). The disordered stretch occupies residues 1–23 (MAADNAGRWPGQPPGPPAPTHPA). Residues 1–31 (MAADNAGRWPGQPPGPPAPTHPASSVSLRWR) are Cytoplasmic-facing. Residues 11–20 (GQPPGPPAPT) are compositionally biased toward pro residues. The helical transmembrane segment at 32–52 (VMLLAMSMVVISVVLMAVAVF) threads the bilayer. Over 53–172 (AVTSRALYDD…TGKVLKRLGT (120 aa)) the chain is Extracellular. The chain crosses the membrane as a helical span at residues 173 to 193 (VLLIVGGLGVAVAAIAGGMVA). Residues 194 to 246 (SAGLRPVGRLTQAAERVARTDDLRPIPVIGNDELARLTETFNMMLRALAESRE) enclose the HAMP domain. Topologically, residues 194–484 (SAGLRPVGRL…SPAGSDEAER (291 aa)) are cytoplasmic. A Histidine kinase domain is found at 254–474 (DAGHELRTPL…AMHVVLPGRP (221 aa)). At H257 the chain carries Phosphohistidine; by autocatalysis.

The cofactor is Mg(2+). Mn(2+) serves as cofactor. Post-translationally, autophosphorylated.

It localises to the cell membrane. It catalyses the reaction ATP + protein L-histidine = ADP + protein N-phospho-L-histidine.. Functionally, member of the two-component regulatory system MprB/MprA which contributes to maintaining a balance among several systems involved in stress resistance and is required for establishment and maintenance of persistent infection in the host. In response to environmental signals MprB acts both as a membrane-associated protein kinase that undergoes autophosphorylation and subsequently transfers the phosphate to MprA, and a protein phosphatase that dephosphorylates phospho-MprA. The sequence is that of Signal transduction histidine-protein kinase/phosphatase MprB (mprB) from Mycolicibacterium vanbaalenii (strain DSM 7251 / JCM 13017 / BCRC 16820 / KCTC 9966 / NRRL B-24157 / PYR-1) (Mycobacterium vanbaalenii).